Consider the following 299-residue polypeptide: S-methyl-5'-thioadenosine phosphorylase (299 aa).

Residues serine 14, 56 to 57, and 89 to 90 contribute to the phosphate site; these read RH and SA. Residue methionine 191 coordinates substrate. Threonine 192 serves as a coordination point for phosphate. Position 215-217 (215-217) interacts with substrate; it reads DYD.

Belongs to the PNP/MTAP phosphorylase family. MTAP subfamily. Homohexamer. Dimer of a homotrimer.

It carries out the reaction S-methyl-5'-thioadenosine + phosphate = 5-(methylsulfanyl)-alpha-D-ribose 1-phosphate + adenine. It functions in the pathway amino-acid biosynthesis; L-methionine biosynthesis via salvage pathway; S-methyl-5-thio-alpha-D-ribose 1-phosphate from S-methyl-5'-thioadenosine (phosphorylase route): step 1/1. Its function is as follows. Catalyzes the reversible phosphorylation of S-methyl-5'-thioadenosine (MTA) to adenine and 5-methylthioribose-1-phosphate. Involved in the breakdown of MTA, a major by-product of polyamine biosynthesis. Responsible for the first step in the methionine salvage pathway after MTA has been generated from S-adenosylmethionine. Has broad substrate specificity with 6-aminopurine nucleosides as preferred substrates. The sequence is that of S-methyl-5'-thioadenosine phosphorylase from Gloeobacter violaceus (strain ATCC 29082 / PCC 7421).